Reading from the N-terminus, the 637-residue chain is Poly(U)-binding-splicing factor hfp (637 aa).

Basic and acidic residues-rich tracts occupy residues 1 to 20 (MGSN…REIS) and 28 to 37 (TRSDSGKSTD). Residues 1–41 (MGSNDRASRSPRSDDQREISDMPATKRTRSDSGKSTDSKIP) are disordered. 2 positions are modified to phosphoserine: Ser-13 and Ser-30. 2 RRM domains span residues 130 to 208 (CRVY…RPSN) and 227 to 305 (NRIY…RSIT). An RRM 3; atypical domain is found at 537–627 (RVIILRNMVG…RRVVAELYDQ (91 aa)).

It belongs to the RRM half pint family. As to quaternary structure, interacts with enc. However, given the cytoplasmic localization of enc, the relevance of such interaction is unclear. Expressed in all germline cells and within the follicle cell.

Its subcellular location is the nucleus. Functionally, splicing factor that regulates oogenesis and controls both mitosis and mRNA localization in the germline by regulating mRNA splicing of a subset of genes within the ovary. Probably acts by regulating the alternative splice site selection of the otu transcript. Also regulates the alternative splicing of eIF4E1 and grk, while it is not involved in the splicing of par-1, sqd or psq. Involved in the alternative splicing of the bicistronic pre-mRNA encoding Kdm3 and CG8176; required for the efficient production of mRNA encoding Kdm3 and Kdm3-mediated regulation of rhino-dependent piRNA production. The sequence is that of Poly(U)-binding-splicing factor hfp from Drosophila melanogaster (Fruit fly).